The chain runs to 491 residues: MELNDLQAQRAAKLAELRAAGLDPYPPRCYRSHTIAEALAAFDDLVAQSTTLTLTGRIIGARRIMGKIAFAHIEDGTGEIQLWLSRADLGDEWFERFRDQLDTFDIVQASGVLRCTKTGERSLFVRELAILAKAINPPPEKWAGLQDVEERHRQRYLDLIVNRDRREIFRARARVISTMRRVLDERGFLEVETPVLQPLYGGAAARPFITYHNALGQNLYLRIATELYLKRLIVGGFPGVYEIGKNFRNEGVDRSHNPEFTMMECYQAYADYHAMMTLVEEMLSEICLAVHGTTTITYQGRELDFRPPWPRIAMATAIADRTGIDITQITDLDALQEAISARGLRVERKASWAKQVDELFSEFVQPHLFQPTFIIDYPVAMSPLAKRIPDRPDFTERFEAFIAGMEIGNAFTELNDPFDQEERFREQLRAFAAGDEEAHQMDEDFINALRYGMPPTGGLGVGIDRLVMVLTDQSNIREVILFPHLRERSDE.

Residues Glu-399 and Glu-406 each coordinate Mg(2+).

This sequence belongs to the class-II aminoacyl-tRNA synthetase family. Homodimer. It depends on Mg(2+) as a cofactor.

The protein resides in the cytoplasm. The catalysed reaction is tRNA(Lys) + L-lysine + ATP = L-lysyl-tRNA(Lys) + AMP + diphosphate. The protein is Lysine--tRNA ligase of Chloroflexus aurantiacus (strain ATCC 29366 / DSM 635 / J-10-fl).